A 447-amino-acid polypeptide reads, in one-letter code: Methyl-coenzyme M reductase I subunit beta (447 aa).

Residue Tyr371 participates in coenzyme M binding. Gly373 contributes to the coenzyme B binding site.

It belongs to the methyl-coenzyme M reductase beta subunit family. In terms of assembly, MCR is a hexamer of two alpha, two beta, and two gamma chains, forming a dimer of heterotrimers. The cofactor is coenzyme F430.

The protein localises to the cytoplasm. It carries out the reaction coenzyme B + methyl-coenzyme M = methane + coenzyme M-coenzyme B heterodisulfide. The protein operates within one-carbon metabolism; methyl-coenzyme M reduction; methane from methyl-coenzyme M: step 1/1. Its function is as follows. Component of the methyl-coenzyme M reductase (MCR) I that catalyzes the reductive cleavage of methyl-coenzyme M (CoM-S-CH3 or 2-(methylthio)ethanesulfonate) using coenzyme B (CoB or 7-mercaptoheptanoylthreonine phosphate) as reductant which results in the production of methane and the mixed heterodisulfide of CoB and CoM (CoM-S-S-CoB). This is the final step in methanogenesis. The polypeptide is Methyl-coenzyme M reductase I subunit beta (mcrB) (Methanocaldococcus jannaschii (strain ATCC 43067 / DSM 2661 / JAL-1 / JCM 10045 / NBRC 100440) (Methanococcus jannaschii)).